We begin with the raw amino-acid sequence, 189 residues long: MTEYKLVVVGAGGVGKSALTIQLIQNHFVDEYDPTIEDSYRKQVVIDGETCLLDILDTAGQEEYSAMRDQYMRTGEGFLLVFAVNSAKSFEDIGTYREQIKRVKDAEEVPMVLVGNKCDLPSWNVQNEQAREVAKQYGIPYIETSAKTRMGVDDAFYTLVREIRKDKDNKGRKGRKTNKPNRRFKCKML.

GTP is bound at residue Gly10–Ser17. The Effector region signature appears at Tyr32–Tyr40. GTP is bound by residues Asp57–Gln61 and Asn116–Asp119. The residue at position 186 (Cys186) is a Cysteine methyl ester. Cys186 is lipidated: S-geranylgeranyl cysteine. Residues Lys187–Leu189 constitute a propeptide, removed in mature form.

It belongs to the small GTPase superfamily. Ras family.

It localises to the cell membrane. The catalysed reaction is GTP + H2O = GDP + phosphate + H(+). With respect to regulation, alternates between an inactive form bound to GDP and an active form bound to GTP. Activated by a guanine nucleotide-exchange factor (GEF) and inactivated by a GTPase-activating protein (GAP). In terms of biological role, ras proteins bind GDP/GTP and possess intrinsic GTPase activity. Plays a role in eye development by regulating cell growth, survival of postmitotic ommatidial cells and differentiation of photoreceptor cells. During larval development, mediates Ptth/tor signaling leading to the production of ecdysone, a hormone required for the initiation of metamorphosis. This is Ras-like protein 1 from Drosophila grimshawi (Hawaiian fruit fly).